We begin with the raw amino-acid sequence, 313 residues long: Porphobilinogen deaminase (313 aa).

Cys-242 is modified (S-(dipyrrolylmethanemethyl)cysteine).

Belongs to the HMBS family. As to quaternary structure, monomer. The cofactor is dipyrromethane.

It catalyses the reaction 4 porphobilinogen + H2O = hydroxymethylbilane + 4 NH4(+). It functions in the pathway porphyrin-containing compound metabolism; protoporphyrin-IX biosynthesis; coproporphyrinogen-III from 5-aminolevulinate: step 2/4. In terms of biological role, tetrapolymerization of the monopyrrole PBG into the hydroxymethylbilane pre-uroporphyrinogen in several discrete steps. The protein is Porphobilinogen deaminase of Pseudomonas entomophila (strain L48).